The chain runs to 68 residues: Conotoxin Lp5.2 (68 aa).

The N-terminal stretch at 1-19 (MRCVPVFIILLLLASPAAP) is a signal peptide. The propeptide occupies 20–54 (KSLETRIQNDLIRAGLTDADLKTEKGFLSGLLNVA).

This sequence belongs to the conotoxin T superfamily. In terms of processing, contains 2 disulfide bonds that can be either 'C1-C3, C2-C4' or 'C1-C4, C2-C3', since these disulfide connectivities have been observed for conotoxins with cysteine framework V (for examples, see AC P0DQQ7 and AC P81755). As to expression, expressed by the venom duct.

It is found in the secreted. The chain is Conotoxin Lp5.2 from Conus leopardus (Leopard cone).